The primary structure comprises 504 residues: Fumitremorgin C monooxygenase (504 aa).

A helical membrane pass occupies residues 12-32 (LGVVGASLIVILGIILLFPLG). Residue cysteine 442 participates in heme binding.

This sequence belongs to the cytochrome P450 family. It depends on heme as a cofactor.

It is found in the membrane. It carries out the reaction fumitremorgin C + 2 reduced [NADPH--hemoprotein reductase] + 2 O2 = 12alpha,13alpha-dihydroxyfumitremorgin C + 2 oxidized [NADPH--hemoprotein reductase] + 2 H2O + 2 H(+). It participates in mycotoxin biosynthesis. Cytochrome P450 monooxygenase; part of the gene cluster that mediates the biosynthesis of fumitremorgins, indole alkaloids that carry not only intriguing chemical structures, but also interesting biological and pharmacological activities. The biosynthesis of fumitremorgin-type alkaloids begins by condensation of the two amino acids L-tryptophan and L-proline to brevianamide F, catalyzed by the non-ribosomal peptide synthetase ftmA. Brevianamide F is then prenylated by the prenyltransferase ftmPT1/ftmB in the presence of dimethylallyl diphosphate, resulting in the formation of tryprostatin B. The three cytochrome P450 monooxygenases, ftmP450-1/ftmC, ftmP450-2/ftmE and ftmP450-3/FtmG, are responsible for the conversion of tryprostatin B to 6-hydroxytryprostatin B, tryprostatin A to fumitremorgin C and fumitremorgin C to 12,13-dihydroxyfumitremorgin C, respectively. The putative methyltransferase ftmMT/ftmD is expected for the conversion of 6-hydroxytryprostatin B to tryprostatin A. FtmPT2/FtmH catalyzes the prenylation of 12,13-dihydroxyfumitre-morgin C in the presence of dimethylallyl diphosphate, resulting in the formation of fumitremorgin B. Fumitremorgin B is further converted to verruculogen by ftmOx1/ftmF via the insertion of an endoperoxide bond between the two prenyl moieties. In some fungal species, verruculogen is further converted to fumitremorgin A, but the enzymes involved in this step have not been identified yet. The protein is Fumitremorgin C monooxygenase of Aspergillus fumigatus (Neosartorya fumigata).